Here is a 136-residue protein sequence, read N- to C-terminus: Small ribosomal subunit protein uS9 (136 aa).

The tract at residues 95 to 136 is disordered; sequence GLSPDNRKPLKTEGHLSRDPRSKERKKYGLKKARKAGQFSKR. A compositionally biased stretch (basic and acidic residues) spans 99–116; it reads DNRKPLKTEGHLSRDPRS. Positions 117–136 are enriched in basic residues; the sequence is KERKKYGLKKARKAGQFSKR.

This sequence belongs to the universal ribosomal protein uS9 family.

This is Small ribosomal subunit protein uS9 from Prochlorococcus marinus subsp. pastoris (strain CCMP1986 / NIES-2087 / MED4).